Reading from the N-terminus, the 459-residue chain is Inositol-trisphosphate 3-kinase A (459 aa).

The tract at residues 1–26 (MTLPGHPTGMARPRGAGPCSPGLERA) is disordered. 3 positions are modified to omega-N-methylarginine: Arg-35, Arg-55, and Arg-62. The disordered stretch occupies residues 49-164 (AAAGEPRARG…TSEDVGQKSH (116 aa)). The segment covering 116–132 (RRLSTSSLSSTGSSSLL) has biased composition (low complexity). Residues Ser-135 and Ser-195 each carry the phosphoserine modification. Residues Ser-195, Lys-207, 247 to 249 (QDL), and Asp-260 contribute to the ATP site. Residues Lys-262 and Arg-283 each coordinate substrate. A calmodulin-binding region spans residues 285–293 (DMYKKMLAV). Residue 310-317 (KPRYMQWR) participates in substrate binding. Positions 334 and 414 each coordinate ATP. Lys-417 contributes to the substrate binding site.

Belongs to the inositol phosphokinase (IPK) family.

The protein resides in the cytoplasm. Its subcellular location is the cytoskeleton. It catalyses the reaction 1D-myo-inositol 1,4,5-trisphosphate + ATP = 1D-myo-inositol 1,3,4,5-tetrakisphosphate + ADP + H(+). Its activity is regulated as follows. Activated by calcium/calmodulin. Catalyzes the phosphorylation of 1D-myo-inositol 1,4,5-trisphosphate (InsP3) into 1D-myo-inositol 1,3,4,5-tetrakisphosphate and participates to the regulation of calcium homeostasis. This chain is Inositol-trisphosphate 3-kinase A, found in Rattus norvegicus (Rat).